A 254-amino-acid chain; its full sequence is Probable protein S-acyltransferase 15 (254 aa).

Transmembrane regions (helical) follow at residues 1–21 and 28–48; these read MGFVYYVTLFVFIDDWVGLQS and ALLFSLLASLCLFSLSICVLV. The DHHC domain occupies 75-125; it reads RKCDKCFAYKPLRTHHCRVCRRCVLKMDHHCLWINNCVGYANYKAFFILVF. Cys-105 (S-palmitoyl cysteine intermediate) is an active-site residue. The next 2 membrane-spanning stretches (helical) occupy residues 119–139 and 164–184; these read AFFILVFYATVASIYSTVLLV and IFMIGLSITLGTLLCWHIYLI.

The protein belongs to the DHHC palmitoyltransferase family.

It localises to the endoplasmic reticulum membrane. Its subcellular location is the cytoplasmic vesicle membrane. It catalyses the reaction L-cysteinyl-[protein] + hexadecanoyl-CoA = S-hexadecanoyl-L-cysteinyl-[protein] + CoA. Palmitoyl acyltransferase. The chain is Probable protein S-acyltransferase 15 (PAT15) from Arabidopsis thaliana (Mouse-ear cress).